Here is a 149-residue protein sequence, read N- to C-terminus: CyanoQ (149 aa).

The signal sequence occupies residues 1–21 (MSRLRSLLSLILVLVTTVLVS). The N-palmitoyl cysteine moiety is linked to residue Cys22. A lipid anchor (S-diacylglycerol cysteine) is attached at Cys22.

This sequence belongs to the PsbQ family. CyanoQ subfamily. In terms of assembly, PSII is composed of 1 copy each of membrane proteins PsbA, PsbB, PsbC, PsbD, PsbE, PsbF, PsbH, PsbI, PsbJ, PsbK, PsbL, PsbM, PsbT, PsbX, PsbY, PsbZ, Psb30/Ycf12, peripheral proteins PsbO, CyanoQ (PsbQ), PsbU, PsbV and a large number of cofactors. It forms dimeric complexes. Pull-down experiments with His-tagged PsbQ pull down dimeric, but not monomeric, PSII. The N-terminus is blocked. Upon expression in E.coli the N-terminus is modified with a diacylglycerol and an acyl group bound to two palmitates and one palmitoleate.

It is found in the cellular thylakoid membrane. One of the extrinsic, lumenal subunits of photosystem II (PSII), which stabilize and protect the oxygen-evolving complex. PSII is a light-driven water plastoquinone oxidoreductase, using light energy to abstract electrons from H(2)O, generating a proton gradient subsequently used for ATP formation. Plays a role in the stability of the oxygen-evolving center on the luminal side of PSII. Required for optimal photoautotrophic growth in the absence of Ca(2+) or Cl(-), functions in optimizing PSII water oxidation/O(2) evolving activity. Requires PsbO to bind to PSII. The sequence is that of CyanoQ from Synechocystis sp. (strain ATCC 27184 / PCC 6803 / Kazusa).